The primary structure comprises 209 residues: Eukaryotic translation initiation factor isoform 4E-2 (209 aa).

A disordered region spans residues 1 to 29; the sequence is MAEVEAALPVAATETPEVAAEGDAGAAEA. The span at 9-29 shows a compositional bias: low complexity; the sequence is PVAATETPEVAAEGDAGAAEA. Residues 51-56, Lys-83, and 101-102 each bind mRNA; these read PGAAWG and WE. Cys-106 and Cys-145 are disulfide-bonded. Residues 152–157 and 197–200 each bind mRNA; these read RQRQDK and RSQK.

Belongs to the eukaryotic initiation factor 4E family. EIF4F is a multi-subunit complex, the composition of which varies with external and internal environmental conditions. It is composed of at least EIF4A, EIF4E and EIF4G. EIF4E is also known to interact with other partners. In higher plants two isoforms of EIF4F have been identified, named isoform EIF4F and isoform EIF(iso)4F. Isoform EIF4F has subunits p220 and p26, whereas isoform EIF(iso)4F has subunits p82 and p28. Post-translationally, according to the redox status, the Cys-106-Cys-145 disulfide bridge may have a role in regulating protein function by affecting its ability to bind capped mRNA.

The protein localises to the cytoplasm. The protein resides in the nucleus. Component of the protein complex eIF4F, which is involved in the recognition of the mRNA cap, ATP-dependent unwinding of 5'-terminal secondary structure and recruitment of mRNA to the ribosome. Recognizes and binds the 7-methylguanosine-containing mRNA cap during an early step in the initiation of protein synthesis and facilitates ribosome binding by inducing the unwinding of the mRNAs secondary structures. The sequence is that of Eukaryotic translation initiation factor isoform 4E-2 from Triticum aestivum (Wheat).